The sequence spans 204 residues: Copper-binding protein CutI (204 aa).

An N-terminal signal peptide occupies residues 1 to 26 (MLKKIALTLCPAIVGSLLFFTAPASA). The Cu(2+) site is built by H27 and E50. At 27 to 178 (HVSVKPAESA…DDSENSGSSA (152 aa)) the chain is on the extracellular side. Residues 146 to 176 (PHSITNITSAKQVTDEHGATKTEDDSENSGS) are disordered. The span at 147 to 157 (HSITNITSAKQ) shows a compositional bias: polar residues. A compositionally biased stretch (basic and acidic residues) spans 158–168 (VTDEHGATKTE). A helical membrane pass occupies residues 179-199 (LDITAMVLSAAAIILSVAALV). The Cytoplasmic portion of the chain corresponds to 200–204 (KKKRA).

It is found in the cell membrane. Copper-binding protein that probably plays a role in copper homeostasis. May act as metallochaperone, possibly to facilitate copper uptake via the CutJ/YcnJ importer. Preferentially binds Cu in its oxidized Cu(II) state in a 1:1 stoichiometry. The sequence is that of Copper-binding protein CutI from Bacillus subtilis (strain 168).